Consider the following 126-residue polypeptide: Aspartate 1-decarboxylase (126 aa).

Serine 25 functions as the Schiff-base intermediate with substrate; via pyruvic acid in the catalytic mechanism. Serine 25 bears the Pyruvic acid (Ser) mark. Substrate is bound at residue threonine 57. Tyrosine 58 functions as the Proton donor in the catalytic mechanism. 73–75 (GAA) contacts substrate.

It belongs to the PanD family. In terms of assembly, heterooctamer of four alpha and four beta subunits. Pyruvate serves as cofactor. Post-translationally, is synthesized initially as an inactive proenzyme, which is activated by self-cleavage at a specific serine bond to produce a beta-subunit with a hydroxyl group at its C-terminus and an alpha-subunit with a pyruvoyl group at its N-terminus.

It is found in the cytoplasm. It catalyses the reaction L-aspartate + H(+) = beta-alanine + CO2. The protein operates within cofactor biosynthesis; (R)-pantothenate biosynthesis; beta-alanine from L-aspartate: step 1/1. Catalyzes the pyruvoyl-dependent decarboxylation of aspartate to produce beta-alanine. In Erwinia tasmaniensis (strain DSM 17950 / CFBP 7177 / CIP 109463 / NCPPB 4357 / Et1/99), this protein is Aspartate 1-decarboxylase.